The chain runs to 1138 residues: Nonsense-mediated mRNA decay factor SMG7 (1138 aa).

Serine 2 bears the N-acetylserine mark. TPR repeat units lie at residues 152-185 (QHCL…VPSN) and 187-219 (QPYN…KFPF). Disordered stretches follow at residues 515–612 (ATDG…LPSR), 649–745 (STAH…YQQA), 838–871 (QPNM…KSSP), 990–1090 (SLPA…PSME), and 1106–1138 (SSMM…NPPH). The residue at position 519 (serine 519) is a Phosphoserine. Residues 525–537 (VLSTGRNPSNSCD) show a composition bias toward polar residues. Basic and acidic residues predominate over residues 548–582 (ENIKPREVNQGRSFPPKEVKSQTELRKTPVSEARK). Threonine 575 is subject to Phosphothreonine. 2 stretches are compositionally biased toward polar residues: residues 584–597 (PVTQ…NSQF) and 649–673 (STAH…SQQR). Residues 674–721 (PSGPGPMNQGPQQSQPPSQPPLTSLPAQPTAQSTSQLQVQALAQQQQS) show a composition bias toward low complexity. 2 positions are modified to phosphoserine: serine 732 and serine 848. Basic and acidic residues predominate over residues 854–868 (PEQDPVPRMPFEDPK). The span at 990-999 (SLPASSDHST) shows a compositional bias: polar residues. Residues 1000-1026 (PASQSPHSSNPSSLPSSPPTHNHNSAP) are compositionally biased toward low complexity. Residues 1037 to 1051 (DNRDRRPADRWKTDK) show a composition bias toward basic and acidic residues. Residues 1063 to 1082 (SATSSSESSWHQASTPSGTW) show a composition bias toward polar residues. Over residues 1118–1132 (QLLMQQKQKQQRGQG) the composition is skewed to low complexity.

In terms of assembly, part of a complex that contains SMG5, SMG7, PPP2CA, a short isoform of UPF3A (isoform UPF3AS, but not isoform UPF3AL) and phosphorylated UPF1. Interacts with DHX34; the interaction is RNA-independent.

The protein resides in the cytoplasm. The protein localises to the nucleus. In terms of biological role, plays a role in nonsense-mediated mRNA decay. Recruits UPF1 to cytoplasmic mRNA decay bodies. Together with SMG5 is thought to provide a link to the mRNA degradation machinery involving exonucleolytic pathways, and to serve as an adapter for UPF1 to protein phosphatase 2A (PP2A), thereby triggering UPF1 dephosphorylation. This chain is Nonsense-mediated mRNA decay factor SMG7, found in Mus musculus (Mouse).